The following is a 221-amino-acid chain: MSETAPAAPAAPAPVEKTPVKKKAKKTGAAAGKRKASGPPVSELITKAVAASKERSGVSLAALKKALAAAGYDVEKNNSRIKLGLKSLVSKGTLVQTKGTGASGSFKLNKKAASGEAKPKAKKAGAAKAKKPAGAAKKPKKATGAATPKKTAKKTPKKAKKPAAAAGAKKVSKSPKKVKAAKPKKAAKSPAKAKAPKAKASKPKASKPKATKAKKAAPRKK.

Residues 1–17 are compositionally biased toward low complexity; sequence MSETAPAAPAAPAPVEK. Residues 1-42 form a disordered region; sequence MSETAPAAPAAPAPVEKTPVKKKAKKTGAAAGKRKASGPPVS. Residue Ser2 is modified to N-acetylserine. Ser2 is modified (phosphoserine). Lys17 bears the N6-acetyllysine mark. A Phosphothreonine modification is found at Thr18. The span at 20 to 36 shows a compositional bias: basic residues; that stretch reads VKKKAKKTGAAAGKRKA. N6-(beta-hydroxybutyryl)lysine is present on residues Lys33, Lys35, and Lys53. Residues 37 to 110 form the H15 domain; sequence SGPPVSELIT…GASGSFKLNK (74 aa). Arg55 carries the citrulline modification. N6-(beta-hydroxybutyryl)lysine is present on residues Lys65, Lys86, and Lys91. Residues 92–221 form a disordered region; sequence GTLVQTKGTG…KAKKAAPRKK (130 aa). Ser105 carries the phosphoserine; by PKC modification. Residues Lys107 and Lys141 each carry the N6-(beta-hydroxybutyryl)lysine modification. Basic residues-rich tracts occupy residues 120-141, 150-161, 170-187, and 194-221; these read KAKKAGAAKAKKPAGAAKKPKK, KTAKKTPKKAKK, KVSKSPKKVKAAKPKKAA, and KAPKAKASKPKASKPKATKAKKAAPRKK.

Belongs to the histone H1/H5 family. In terms of processing, H1 histones are progressively phosphorylated during the cell cycle, becoming maximally phosphorylated during late G2 phase and M phase, and being dephosphorylated sharply thereafter. Hydroxybutyrylation of histones is induced by starvation. Post-translationally, citrullination at Arg-55 (H1R54ci) by PADI4 takes place within the DNA-binding site of H1 and results in its displacement from chromatin and global chromatin decondensation, thereby promoting pluripotency and stem cell maintenance.

The protein resides in the nucleus. It is found in the chromosome. Histone H1 protein binds to linker DNA between nucleosomes forming the macromolecular structure known as the chromatin fiber. Histones H1 are necessary for the condensation of nucleosome chains into higher-order structured fibers. Also acts as a regulator of individual gene transcription through chromatin remodeling, nucleosome spacing and DNA methylation. In Mus musculus (Mouse), this protein is Histone H1.3.